The following is a 306-amino-acid chain: Elongation factor Ts (306 aa).

The involved in Mg(2+) ion dislocation from EF-Tu stretch occupies residues 80–83 (TDFV).

The protein belongs to the EF-Ts family.

It localises to the cytoplasm. In terms of biological role, associates with the EF-Tu.GDP complex and induces the exchange of GDP to GTP. It remains bound to the aminoacyl-tRNA.EF-Tu.GTP complex up to the GTP hydrolysis stage on the ribosome. The sequence is that of Elongation factor Ts from Methylorubrum populi (strain ATCC BAA-705 / NCIMB 13946 / BJ001) (Methylobacterium populi).